The chain runs to 258 residues: Global transcriptional regulator CodY (258 aa).

The interval 1–156 is GAF domain; that stretch reads MSSLLDKTRM…SATIIGLEIL (156 aa). Positions 204–223 form a DNA-binding region, H-T-H motif; that stretch reads ASKIADKVGITRSVIVNALR.

The protein belongs to the CodY family.

It is found in the cytoplasm. In terms of biological role, DNA-binding global transcriptional regulator which is involved in the adaptive response to starvation and acts by directly or indirectly controlling the expression of numerous genes in response to nutrient availability. During rapid exponential growth, CodY is highly active and represses genes whose products allow adaptation to nutrient depletion. The chain is Global transcriptional regulator CodY from Clostridium botulinum (strain ATCC 19397 / Type A).